Here is a 783-residue protein sequence, read N- to C-terminus: Tripartite motif-containing protein 67 (783 aa).

The segment at 7–42 (CPVCGSLFREPIILPCSHNVCLPCARTIAVQTPDGE) adopts an RING-type; degenerate zinc-finger fold. The B box-type 1; degenerate zinc-finger motif lies at 206–253 (AICQLCDRTPPEPAATLCEQCDVLYCSACQLKCHPSRGPFAKHRLVQP). Positions 247–295 (KHRLVQPPPPPPPPAEAASGPTGTAQGAPSGGGGCKSPGGAGAGATGGS) are disordered. Positions 252 to 261 (QPPPPPPPPA) are enriched in pro residues. Positions 275-293 (PSGGGGCKSPGGAGAGATG) are enriched in gly residues. A B box-type 2 zinc finger spans residues 298-340 (RKFPTCPEHEMENYSMYCVSCRTPVCYLCLEEGRHAKHEVKPL). 4 residues coordinate Zn(2+): C303, H306, C326, and H332. The stretch at 345 to 382 (KQHKAQLSQALNGVSDKAKEAKEFLVQLKNILQQIQEN) forms a coiled coil. The 59-residue stretch at 448–506 (IKENDPSGFLQISDALIKRVQVSQEQWVKGALEPKVSAEFDLTLDSEPLLQAIHQLDFI) folds into the COS domain. In terms of domain architecture, Fibronectin type-III spans 513–607 (PPVPLLQLEK…KTVVLQTSDV (95 aa)). In terms of domain architecture, B30.2/SPRY spans 589-780 (NSSGVGPYSK…VPTNLGRPKL (192 aa)).

Belongs to the TRIM/RBCC family.

The protein resides in the cytoplasm. It is found in the cytoskeleton. The protein is Tripartite motif-containing protein 67 (TRIM67) of Homo sapiens (Human).